We begin with the raw amino-acid sequence, 187 residues long: MEPGVQDLGLSSSEDESPSLAIRSPTLRKPLKHSTPEEAALGWSPRPSGGASYLSGSPMPAHFSQDLASHPAGVSPPATVRKRRLSTLWASKESSLDLSAPGEEPPTSASLTQRQRQRQQQQQQQESLRAKSWAQNPGLPGILNTTGRKRRDPKKRAAAMERVRQWEIYVLQNIEEATQHELTIEDD.

2 disordered regions span residues 1–79 (MEPG…PPAT) and 92–159 (KESS…RAAA). The stretch at 111–131 (LTQRQRQRQQQQQQQESLRAK) forms a coiled coil. Basic residues predominate over residues 147–157 (GRKRRDPKKRA).

The polypeptide is Coiled-coil domain-containing protein 201 (Homo sapiens (Human)).